The primary structure comprises 175 residues: Gamma-crystallin B (175 aa).

Beta/gamma crystallin 'Greek key' domains follow at residues 2-40 (GKIT…RVES) and 41-83 (GCWM…HLIP). A connecting peptide region spans residues 84-88 (PHSGT). 2 Beta/gamma crystallin 'Greek key' domains span residues 89-129 (YRMK…NVLE) and 130-172 (GSWI…RRVM).

It belongs to the beta/gamma-crystallin family. Monomer.

Crystallins are the dominant structural components of the vertebrate eye lens. The sequence is that of Gamma-crystallin B (CRYGB) from Macaca mulatta (Rhesus macaque).